Here is a 920-residue protein sequence, read N- to C-terminus: MNSMNPMKPALPPAPHGDGSFAYESVPWQQSATQPAGSLSVVTTVWGVGNATQSQVLGNPMGPAGSPSGSSMMPGVAGGSSALTSPQCLGQQAFAEGGANKGYVQQGVYSRGGYPGAPGFTTGYAGGPGGLGLPSHAARPSTDFTQAAAAAAVAAAAATATATATATVAALQEKQSQELSQYGAMGAGQSFNSQFLQHGGPRGPSVPAGMNPTGIGGVMGPSGLSPLAMNPTRAAGMTPLYAGQRLPQHGYPGPPQAQPLPRQGVKRTYSEVYPGQQYLQGGQYAPSTAQFAPSPGQPPAPSPSYPGHRLPLQQGMTQSLSVPGPTGLHYKPTEQFNGQGASFNGGSVSYSQPGLSGPTRSIPGYPSSPLPGNPTPPMTPSSSVPYMSPNQEVKSPFLPDLKPNLNSLHSSPSGSGPCDELRLTFPVRDGVVLEPFRLQHNLAVSNHVFQLRDSVYKTLIMRPDLELQFKCYHHEDRQMNTNWPASVQVSVNATPLTIERGDNKTSHKPLYLKHVCQPGRNTIQITVTACCCSHLFVLQLVHRPSVRSVLQGLLKKRLLPAEHCITKIKRNFSSGTIPGTPGPNGEDGVEQTAIKVSLKCPITFRRIQLPARGHDCRHIQCFDLESYLQLNCERGTWRCPVCNKTALLEGLEVDQYMLGILIYIQNSDYEEITIDPTCSWKPVPVKPDMHIKEEPDGPALKRCRTVSPAHVLMPSVMEMIAALGPGAAPFAPLQPPSVPAPSDYPGQGSSFLGPGTFPESFPPTTPSTPTLAEFTPGPPPISYQSDIPSSLLTSEKSTACLPSQMAPAGHLDPTHNPGTPGLHTSNLGAPPGPQLHHSNPPPASRQSLGQASLGPTGELAFSPATGVMGPPSMSGAGEAPEPALDLLPELTNPDELLSYLGPPDLPTNNNDDLLSLFENN.

Disordered regions lie at residues 1-22 (MNSMNPMKPALPPAPHGDGSFA) and 54-79 (SQVLGNPMGPAGSPSGSSMMPGVAGG). The segment covering 60-79 (PMGPAGSPSGSSMMPGVAGG) has biased composition (low complexity). Position 111 is an omega-N-methylarginine (Arg-111). 2 disordered regions span residues 243 to 265 (GQRLPQHGYPGPPQAQPLPRQGV) and 286 to 391 (PSTA…SPNQ). 2 positions are modified to asymmetric dimethylarginine: Arg-245 and Arg-262. Residues 295-304 (PGQPPAPSPS) show a composition bias toward pro residues. Residues 334–354 (EQFNGQGASFNGGSVSYSQPG) are compositionally biased toward polar residues. A compositionally biased stretch (pro residues) spans 366-379 (PSSPLPGNPTPPMT). Residues 380–389 (PSSSVPYMSP) show a composition bias toward low complexity. Residues Lys-402 and Lys-457 each participate in a glycyl lysine isopeptide (Lys-Gly) (interchain with G-Cter in SUMO2) cross-link. An interaction with AR region spans residues 435–506 (PFRLQHNLAV…TIERGDNKTS (72 aa)). The segment at 585–671 (GEDGVEQTAI…IYIQNSDYEE (87 aa)) adopts an SP-RING-type zinc-finger fold. Residues Cys-616, His-618, Cys-639, and Cys-642 each contribute to the Zn(2+) site. Lys-692 participates in a covalent cross-link: Glycyl lysine isopeptide (Lys-Gly) (interchain with G-Cter in SUMO2). Residues 803–920 (SQMAPAGHLD…DDLLSLFENN (118 aa)) form a disordered region. Residues 876 to 890 (AGEAPEPALDLLPEL) are compositionally biased toward low complexity. Positions 906-920 (PTNNNDDLLSLFENN) are enriched in polar residues.

Interacts with AR, SMARCA4/BRG1 and SMARCE1/BAF57. Interaction with either SMARCA4 and SMARCE1 enhances AR-mediated transcription. As to expression, expressed most abundantly in testis with lower levels in heart, brain, pancreas, prostate and ovary.

The protein resides in the nucleus. Functionally, increases ligand-dependent transcriptional activity of AR and other nuclear hormone receptors. This chain is Zinc finger MIZ domain-containing protein 2 (ZMIZ2), found in Homo sapiens (Human).